Consider the following 530-residue polypeptide: Sulfate adenylyltransferase (530 aa).

The segment at 1-178 (MPIPAPHGGK…IQGLDYPTHY (178 aa)) is N-terminal. The tract at residues 179–410 (DYIPFRKTPT…LRESNPPRSK (232 aa)) is catalytic. Residue Gln208 coordinates sulfate. ATP contacts are provided by residues 208-211 (QTRN) and 304-307 (GRDH). Residues Thr209, Arg210, and Asn211 contribute to the active site. Arg210 is a sulfate binding site. Ala308 is a sulfate binding site. Position 348 (Val348) interacts with ATP. The interval 411–530 (QGFAIVIDSS…LVSQGFYQQS (120 aa)) is required for oligomerization; adenylyl-sulfate kinase-like.

This sequence belongs to the sulfate adenylyltransferase family. Homohexamer. Dimer of trimers.

The protein resides in the cytoplasm. It catalyses the reaction sulfate + ATP + H(+) = adenosine 5'-phosphosulfate + diphosphate. The protein operates within sulfur metabolism; hydrogen sulfide biosynthesis; sulfite from sulfate: step 1/3. Its function is as follows. Catalyzes the first intracellular reaction of sulfate assimilation, forming adenosine-5'-phosphosulfate (APS) from inorganic sulfate and ATP. Plays an important role in sulfate activation as a component of the biosynthesis pathway of sulfur-containing amino acids. The polypeptide is Sulfate adenylyltransferase (Debaryomyces hansenii (strain ATCC 36239 / CBS 767 / BCRC 21394 / JCM 1990 / NBRC 0083 / IGC 2968) (Yeast)).